The primary structure comprises 725 residues: Another transcription unit protein (725 aa).

Acidic residues predominate over residues 1–10 (MGSQNSDDDS). 3 disordered regions span residues 1–379 (MGSQ…PETR), 566–603 (RQAM…EGSD), and 617–725 (YKKG…SDND). Residues 11–70 (GSSGSSRSGSRSVTPQGGSAPGSQRSRRSGSGSDRSRSGSRSSRSRSGSGSPRSARSGSA) show a composition bias toward low complexity. Over residues 82-101 (RSKRSRSAHSRRSGSARSRK) the composition is skewed to basic residues. Polar residues predominate over residues 104-116 (TPESPQSHRSGSL). Residues 117–140 (QSRKSGSPQSRRSGSPQSRKSGST) show a composition bias toward low complexity. Basic residues predominate over residues 141–160 (HSRRSGSAHSRRSGSARSRK). Serine 175, serine 186, serine 188, and serine 190 each carry phosphoserine. Residues 206–223 (SRSRSRSRSGSRTSRSRS) show a composition bias toward basic residues. Low complexity predominate over residues 224-242 (KTGTPSPNRSRSGSASGSG). Residues serine 265, serine 267, and serine 269 each carry the phosphoserine modification. At threonine 286 the chain carries Phosphothreonine. A phosphoserine mark is found at serine 288, serine 290, and serine 312. Residues 306–318 (GDADDISDDEDEA) are compositionally biased toward acidic residues. The segment covering 325-353 (SPVRSKSRSQSKSHSHSRSMSHSRSRSRS) has biased composition (basic residues). Basic and acidic residues predominate over residues 354–369 (RSRDKVESQVESAPKE). A Phosphoserine modification is found at serine 355. The span at 571–582 (NQHKSLPKKKKP) shows a compositional bias: basic residues. Position 593 is a phosphothreonine (threonine 593). Phosphoserine is present on residues serine 595, serine 602, and serine 631. Threonine 632 carries the post-translational modification Phosphothreonine. Serine 635, serine 636, and serine 642 each carry phosphoserine. Residues 644–665 (FEARRSKKVDKAKASKALRDSD) show a composition bias toward basic and acidic residues. Residues 710–725 (SGSGSGSGSGSGSDND) are compositionally biased toward gly residues.

The polypeptide is Another transcription unit protein (Atu) (Drosophila melanogaster (Fruit fly)).